The chain runs to 346 residues: tRNA N6-adenosine threonylcarbamoyltransferase (346 aa).

Residues His111 and His115 each contribute to the Fe cation site. Residues 134-138 (LVSGG), Asp167, Gly180, and Asn279 contribute to the substrate site. Residue Asp307 participates in Fe cation binding.

Belongs to the KAE1 / TsaD family. Fe(2+) serves as cofactor.

It is found in the cytoplasm. The catalysed reaction is L-threonylcarbamoyladenylate + adenosine(37) in tRNA = N(6)-L-threonylcarbamoyladenosine(37) in tRNA + AMP + H(+). In terms of biological role, required for the formation of a threonylcarbamoyl group on adenosine at position 37 (t(6)A37) in tRNAs that read codons beginning with adenine. Is involved in the transfer of the threonylcarbamoyl moiety of threonylcarbamoyl-AMP (TC-AMP) to the N6 group of A37, together with TsaE and TsaB. TsaD likely plays a direct catalytic role in this reaction. This chain is tRNA N6-adenosine threonylcarbamoyltransferase, found in Burkholderia lata (strain ATCC 17760 / DSM 23089 / LMG 22485 / NCIMB 9086 / R18194 / 383).